A 381-amino-acid chain; its full sequence is Succinyl-diaminopimelate desuccinylase (381 aa).

His72 lines the Zn(2+) pocket. Asp74 is an active-site residue. Position 105 (Asp105) interacts with Zn(2+). The active-site Proton acceptor is the Glu139. Residues Glu140, Glu168, and His354 each contribute to the Zn(2+) site.

It belongs to the peptidase M20A family. DapE subfamily. As to quaternary structure, homodimer. Requires Zn(2+) as cofactor. It depends on Co(2+) as a cofactor.

It carries out the reaction N-succinyl-(2S,6S)-2,6-diaminopimelate + H2O = (2S,6S)-2,6-diaminopimelate + succinate. Its pathway is amino-acid biosynthesis; L-lysine biosynthesis via DAP pathway; LL-2,6-diaminopimelate from (S)-tetrahydrodipicolinate (succinylase route): step 3/3. In terms of biological role, catalyzes the hydrolysis of N-succinyl-L,L-diaminopimelic acid (SDAP), forming succinate and LL-2,6-diaminopimelate (DAP), an intermediate involved in the bacterial biosynthesis of lysine and meso-diaminopimelic acid, an essential component of bacterial cell walls. The polypeptide is Succinyl-diaminopimelate desuccinylase (Shewanella sp. (strain MR-7)).